The sequence spans 468 residues: uncharacterized protein (468 aa).

A run of 12 helical transmembrane segments spans residues 13–33 (LEAF…YALF), 40–60 (LMII…HCYL), 76–96 (ALLI…GGTI), 112–132 (LYVT…TSWG), 141–161 (FMGV…AVVA), 194–214 (LLYT…VYGL), 237–257 (VYHF…GSIT), 260–280 (PTIP…ILIQ), 328–348 (CFCA…TVII), 354–374 (FVHS…TMIG), 414–434 (IIEP…TLGV), and 443–463 (AILC…GIGI).

This sequence belongs to the NhaC Na(+)/H(+) (TC 2.A.35) antiporter family.

The protein localises to the cell membrane. This is an uncharacterized protein from Haemophilus influenzae (strain ATCC 51907 / DSM 11121 / KW20 / Rd).